The chain runs to 88 residues: Putative membrane protein insertion efficiency factor (88 aa).

This sequence belongs to the UPF0161 family.

It localises to the cell inner membrane. Functionally, could be involved in insertion of integral membrane proteins into the membrane. The protein is Putative membrane protein insertion efficiency factor of Rickettsia canadensis (strain McKiel).